The chain runs to 150 residues: Centrin-B (150 aa).

3 consecutive EF-hand domains span residues 12–46 (DQISEIKESFDMFKSDNGKLDNDQIKYAFKALGCE), 80–114 (DSMSTLEQAFKLFVKDGSGITFKDLKKVAINIGEE), and 115–150 (CSDSDLYDMIEFADTDGDGVINKSEFISLMTTKKVL). Ca(2+) is bound by residues aspartate 128, aspartate 130, aspartate 132, and glutamate 139.

The protein belongs to the centrin family.

The protein resides in the cytoplasm. It localises to the cytoskeleton. The protein localises to the microtubule organizing center. Its subcellular location is the centrosome. Plays a fundamental role in microtubule-organizing center structure and function. This is Centrin-B (cenB) from Dictyostelium discoideum (Social amoeba).